We begin with the raw amino-acid sequence, 343 residues long: Heat-inducible transcription repressor HrcA (343 aa).

This sequence belongs to the HrcA family.

Its function is as follows. Negative regulator of class I heat shock genes (grpE-dnaK-dnaJ and groELS operons). Prevents heat-shock induction of these operons. The sequence is that of Heat-inducible transcription repressor HrcA from Thermobifida fusca (strain YX).